The following is a 217-amino-acid chain: Phosphoribosylformylglycinamidine synthase subunit PurQ (217 aa).

One can recognise a Glutamine amidotransferase type-1 domain in the interval 2-217 (SIGVLVFPGS…GRVLLQGLLS (216 aa)). Cys86 serves as the catalytic Nucleophile. Catalysis depends on residues His194 and Glu196.

As to quaternary structure, part of the FGAM synthase complex composed of 1 PurL, 1 PurQ and 2 PurS subunits.

The protein localises to the cytoplasm. It catalyses the reaction N(2)-formyl-N(1)-(5-phospho-beta-D-ribosyl)glycinamide + L-glutamine + ATP + H2O = 2-formamido-N(1)-(5-O-phospho-beta-D-ribosyl)acetamidine + L-glutamate + ADP + phosphate + H(+). The enzyme catalyses L-glutamine + H2O = L-glutamate + NH4(+). Its pathway is purine metabolism; IMP biosynthesis via de novo pathway; 5-amino-1-(5-phospho-D-ribosyl)imidazole from N(2)-formyl-N(1)-(5-phospho-D-ribosyl)glycinamide: step 1/2. Part of the phosphoribosylformylglycinamidine synthase complex involved in the purines biosynthetic pathway. Catalyzes the ATP-dependent conversion of formylglycinamide ribonucleotide (FGAR) and glutamine to yield formylglycinamidine ribonucleotide (FGAM) and glutamate. The FGAM synthase complex is composed of three subunits. PurQ produces an ammonia molecule by converting glutamine to glutamate. PurL transfers the ammonia molecule to FGAR to form FGAM in an ATP-dependent manner. PurS interacts with PurQ and PurL and is thought to assist in the transfer of the ammonia molecule from PurQ to PurL. This Parasynechococcus marenigrum (strain WH8102) protein is Phosphoribosylformylglycinamidine synthase subunit PurQ.